We begin with the raw amino-acid sequence, 259 residues long: tRNA (guanine-N(7)-)-methyltransferase (259 aa).

Positions 1-36 (MTFPSHNPPETGHPSAAPDEALPAAEAPVPGDPEAR) are disordered. Low complexity predominate over residues 14 to 29 (PSAAPDEALPAAEAPV). The S-adenosyl-L-methionine site is built by Glu-91, Glu-116, Asp-143, and Asp-166. Asp-166 is a catalytic residue. Residues Lys-170, Asp-202, and 237–240 (TKFE) each bind substrate.

Belongs to the class I-like SAM-binding methyltransferase superfamily. TrmB family.

The catalysed reaction is guanosine(46) in tRNA + S-adenosyl-L-methionine = N(7)-methylguanosine(46) in tRNA + S-adenosyl-L-homocysteine. It participates in tRNA modification; N(7)-methylguanine-tRNA biosynthesis. Functionally, catalyzes the formation of N(7)-methylguanine at position 46 (m7G46) in tRNA. This Aromatoleum aromaticum (strain DSM 19018 / LMG 30748 / EbN1) (Azoarcus sp. (strain EbN1)) protein is tRNA (guanine-N(7)-)-methyltransferase.